We begin with the raw amino-acid sequence, 371 residues long: Lombricine kinase (371 aa).

The Phosphagen kinase N-terminal domain maps to 1-86; the sequence is MPKFTARQNF…FDAVINEKHG (86 aa). The 243-residue stretch at 113–355 folds into the Phosphagen kinase C-terminal domain; the sequence is YVKSARIRTG…GKLIEYEKLL (243 aa). ATP-binding positions include 116–120, His-179, Arg-224, Arg-280, 308–313, and Asp-323; these read SARIR and RGTGGE.

It belongs to the ATP:guanido phosphotransferase family. In terms of assembly, homodimer.

The enzyme catalyses L-lombricine + ATP = N-phospho-L-lombricine + ADP + H(+). The sequence is that of Lombricine kinase from Eisenia fetida (Red wiggler worm).